A 94-amino-acid polypeptide reads, in one-letter code: Mitochondrial import inner membrane translocase subunit Tim8 A (94 aa).

Positions 47-70 (CWDKCIDRPGNKLDSRTESCLVSC) match the Twin CX3C motif motif. Cystine bridges form between cysteine 47-cysteine 70 and cysteine 51-cysteine 66.

This sequence belongs to the small Tim family. Heterohexamer; composed of 3 copies of TIMM8A and 3 copies of TIMM13, named soluble 70 kDa complex. Associates with the TIM22 complex, whose core is composed of TIMM22.

It localises to the mitochondrion inner membrane. Functionally, mitochondrial intermembrane chaperone that participates in the import and insertion of some multi-pass transmembrane proteins into the mitochondrial inner membrane. Also required for the transfer of beta-barrel precursors from the TOM complex to the sorting and assembly machinery (SAM complex) of the outer membrane. Acts as a chaperone-like protein that protects the hydrophobic precursors from aggregation and guide them through the mitochondrial intermembrane space. The TIMM8-TIMM13 complex mediates the import of some proteins while the predominant TIMM9-TIMM10 70 kDa complex mediates the import of much more proteins. This chain is Mitochondrial import inner membrane translocase subunit Tim8 A (timm8a), found in Xenopus laevis (African clawed frog).